The chain runs to 162 residues: Phosphopantetheine adenylyltransferase (162 aa).

A substrate-binding site is contributed by Thr-10. Residues 10-11 (TF) and His-18 each bind ATP. The substrate site is built by Lys-42, Leu-74, and Arg-88. Residues 89–91 (GLR), Glu-99, and 124–130 (FSCISST) contribute to the ATP site.

Belongs to the bacterial CoaD family. Homohexamer. Mg(2+) is required as a cofactor.

The protein resides in the cytoplasm. It catalyses the reaction (R)-4'-phosphopantetheine + ATP + H(+) = 3'-dephospho-CoA + diphosphate. It functions in the pathway cofactor biosynthesis; coenzyme A biosynthesis; CoA from (R)-pantothenate: step 4/5. Functionally, reversibly transfers an adenylyl group from ATP to 4'-phosphopantetheine, yielding dephospho-CoA (dPCoA) and pyrophosphate. The sequence is that of Phosphopantetheine adenylyltransferase from Francisella tularensis subsp. novicida (strain U112).